We begin with the raw amino-acid sequence, 218 residues long: MGQKVDPRGLRLGIVRDWDAKWYAGKKDFSNLLLEDVKIRDYIKSKLLAAGISRIHIERTANRVRIAIHTAKPGVVIGRGGTEVEVLRKELEKLTGRQISINIVEIKTPELDAQLVAENVAAQLQRRVAFRRAMKQAVGRAMKLGAKGIRISVAGRLAGAEIARTEWYSEGKVPLHTLRADIDYGFSEAKTTYGKIGVKVWIYRGEILPERAAREGGR.

A KH type-2 domain is found at 39-107 (IRDYIKSKLL…QISINIVEIK (69 aa)).

This sequence belongs to the universal ribosomal protein uS3 family. In terms of assembly, part of the 30S ribosomal subunit. Forms a tight complex with proteins S10 and S14.

Functionally, binds the lower part of the 30S subunit head. Binds mRNA in the 70S ribosome, positioning it for translation. This is Small ribosomal subunit protein uS3 from Desulforudis audaxviator (strain MP104C).